The sequence spans 56 residues: Large ribosomal subunit protein bL33 (56 aa).

This sequence belongs to the bacterial ribosomal protein bL33 family.

In Beutenbergia cavernae (strain ATCC BAA-8 / DSM 12333 / CCUG 43141 / JCM 11478 / NBRC 16432 / NCIMB 13614 / HKI 0122), this protein is Large ribosomal subunit protein bL33.